The primary structure comprises 83 residues: Small ribosomal subunit protein bS18 (83 aa).

Belongs to the bacterial ribosomal protein bS18 family. As to quaternary structure, part of the 30S ribosomal subunit. Forms a tight heterodimer with protein bS6.

Its function is as follows. Binds as a heterodimer with protein bS6 to the central domain of the 16S rRNA, where it helps stabilize the platform of the 30S subunit. The protein is Small ribosomal subunit protein bS18 of Methylobacterium radiotolerans (strain ATCC 27329 / DSM 1819 / JCM 2831 / NBRC 15690 / NCIMB 10815 / 0-1).